A 509-amino-acid chain; its full sequence is Maturase K (509 aa).

The protein belongs to the intron maturase 2 family. MatK subfamily.

It is found in the plastid. It localises to the chloroplast. Its function is as follows. Usually encoded in the trnK tRNA gene intron. Probably assists in splicing its own and other chloroplast group II introns. This is Maturase K from Otacanthus azureus (Brazilian snapdragon).